The sequence spans 133 residues: Peptide methionine sulfoxide reductase MsrB (133 aa).

Residues 8-130 form the MsrB domain; the sequence is LEEWRAMLDP…NSVCLDFKPR (123 aa). Residues cysteine 47, cysteine 50, cysteine 96, and cysteine 99 each coordinate Zn(2+). Catalysis depends on cysteine 119, which acts as the Nucleophile.

It belongs to the MsrB Met sulfoxide reductase family. Zn(2+) serves as cofactor.

It carries out the reaction L-methionyl-[protein] + [thioredoxin]-disulfide + H2O = L-methionyl-(R)-S-oxide-[protein] + [thioredoxin]-dithiol. This is Peptide methionine sulfoxide reductase MsrB from Pseudomonas putida (strain W619).